The primary structure comprises 432 residues: Histidinol dehydrogenase (432 aa).

S240, Q262, and H265 together coordinate substrate. 2 residues coordinate Zn(2+): Q262 and H265. Active-site proton acceptor residues include E330 and H331. Substrate is bound by residues H331, D364, E418, and H423. D364 is a binding site for Zn(2+). Position 423 (H423) interacts with Zn(2+).

It belongs to the histidinol dehydrogenase family. Zn(2+) is required as a cofactor.

It carries out the reaction L-histidinol + 2 NAD(+) + H2O = L-histidine + 2 NADH + 3 H(+). It participates in amino-acid biosynthesis; L-histidine biosynthesis; L-histidine from 5-phospho-alpha-D-ribose 1-diphosphate: step 9/9. Functionally, catalyzes the sequential NAD-dependent oxidations of L-histidinol to L-histidinaldehyde and then to L-histidine. The chain is Histidinol dehydrogenase from Wolinella succinogenes (strain ATCC 29543 / DSM 1740 / CCUG 13145 / JCM 31913 / LMG 7466 / NCTC 11488 / FDC 602W) (Vibrio succinogenes).